Here is a 105-residue protein sequence, read N- to C-terminus: Urease subunit beta (105 aa).

It belongs to the urease beta subunit family. Heterotrimer of UreA (gamma), UreB (beta) and UreC (alpha) subunits. Three heterotrimers associate to form the active enzyme.

The protein resides in the cytoplasm. It carries out the reaction urea + 2 H2O + H(+) = hydrogencarbonate + 2 NH4(+). It participates in nitrogen metabolism; urea degradation; CO(2) and NH(3) from urea (urease route): step 1/1. This Shewanella halifaxensis (strain HAW-EB4) protein is Urease subunit beta.